The chain runs to 114 residues: uncharacterized protein (114 aa).

This is an uncharacterized protein from Archaeoglobus fulgidus (strain ATCC 49558 / DSM 4304 / JCM 9628 / NBRC 100126 / VC-16).